A 566-amino-acid chain; its full sequence is Proline--tRNA ligase (566 aa).

The protein belongs to the class-II aminoacyl-tRNA synthetase family. ProS type 1 subfamily. Homodimer.

The protein localises to the cytoplasm. The catalysed reaction is tRNA(Pro) + L-proline + ATP = L-prolyl-tRNA(Pro) + AMP + diphosphate. Functionally, catalyzes the attachment of proline to tRNA(Pro) in a two-step reaction: proline is first activated by ATP to form Pro-AMP and then transferred to the acceptor end of tRNA(Pro). As ProRS can inadvertently accommodate and process non-cognate amino acids such as alanine and cysteine, to avoid such errors it has two additional distinct editing activities against alanine. One activity is designated as 'pretransfer' editing and involves the tRNA(Pro)-independent hydrolysis of activated Ala-AMP. The other activity is designated 'posttransfer' editing and involves deacylation of mischarged Ala-tRNA(Pro). The misacylated Cys-tRNA(Pro) is not edited by ProRS. The polypeptide is Proline--tRNA ligase (Staphylococcus haemolyticus (strain JCSC1435)).